The following is a 356-amino-acid chain: tRNA N6-adenosine threonylcarbamoyltransferase (356 aa).

The Fe cation site is built by histidine 131 and histidine 135. Substrate-binding positions include 154 to 158 (LVSGG), aspartate 187, glycine 200, and asparagine 289. Aspartate 317 contributes to the Fe cation binding site.

This sequence belongs to the KAE1 / TsaD family. The cofactor is Fe(2+).

Its subcellular location is the cytoplasm. It carries out the reaction L-threonylcarbamoyladenylate + adenosine(37) in tRNA = N(6)-L-threonylcarbamoyladenosine(37) in tRNA + AMP + H(+). In terms of biological role, required for the formation of a threonylcarbamoyl group on adenosine at position 37 (t(6)A37) in tRNAs that read codons beginning with adenine. Is involved in the transfer of the threonylcarbamoyl moiety of threonylcarbamoyl-AMP (TC-AMP) to the N6 group of A37, together with TsaE and TsaB. TsaD likely plays a direct catalytic role in this reaction. The chain is tRNA N6-adenosine threonylcarbamoyltransferase from Ruthia magnifica subsp. Calyptogena magnifica.